Reading from the N-terminus, the 336-residue chain is UPF0324 membrane protein lp_2841 (336 aa).

A run of 9 helical transmembrane segments spans residues 5-22 (GILPGLVTSLVIAIISQG), 26-48 (FVPALGAATIAILLGIIGGNTFL), 84-106 (IGGFGVLFILCQMTITIVGALWL), 116-138 (VRMLMAGGNAVCGSSAIASIAPV), 150-172 (ITLVNLMGTVLMLTLPVLGMAVF), 204-226 (TVQFATIFKIMRIMMLVVVVLIF), 255-277 (WYVAGFLILCALNSLISLPAIIG), 282-304 (TISSWFEIIALAAIGLRLNLVNF), and 311-333 (LALYGLGVGTIQVVSALILITLL).

It belongs to the UPF0324 family.

Its subcellular location is the cell membrane. This chain is UPF0324 membrane protein lp_2841, found in Lactiplantibacillus plantarum (strain ATCC BAA-793 / NCIMB 8826 / WCFS1) (Lactobacillus plantarum).